The primary structure comprises 287 residues: Urease accessory protein UreD (287 aa).

This sequence belongs to the UreD family. UreD, UreF and UreG form a complex that acts as a GTP-hydrolysis-dependent molecular chaperone, activating the urease apoprotein by helping to assemble the nickel containing metallocenter of UreC. The UreE protein probably delivers the nickel.

The protein resides in the cytoplasm. In terms of biological role, required for maturation of urease via the functional incorporation of the urease nickel metallocenter. This Ureaplasma parvum serovar 3 (strain ATCC 27815 / 27 / NCTC 11736) protein is Urease accessory protein UreD.